The chain runs to 254 residues: Low affinity immunoglobulin gamma Fc region receptor III-A (254 aa).

An N-terminal signal peptide occupies residues 1 to 20; that stretch reads MWQLLLPTALLLLVSAGMRA. Topologically, residues 21–206 are extracellular; the sequence is EDLPKAVVFL…SSISSFFPPG (186 aa). 2 Ig-like C2-type domains span residues 24-105 and 107-189; these read PKAV…LEVH and GWLL…VNIT. 2 disulfide bridges follow: Cys47-Cys89 and Cys128-Cys172. N-linked (GlcNAc...) asparagine glycosylation is present at Asn187. A helical transmembrane segment spans residues 207–229; it reads YQVSFCLVMVLLFAVDTGLYFSV. Topologically, residues 230–254 are cytoplasmic; it reads KKSVPSSTRDWEDHKFKWSKDPQDK.

In terms of assembly, forms a heterooligomeric complex with ITAM-containing signaling subunits, either a homodimer of CD247, a homodimer of FCER1G or a heterodimer of CD247 and FCER1G, to form a functional receptor complex. Interacts (via transmembrane domain) with signaling subunits; this interaction is a prerequisite for receptor complex expression on the cell surface and intracellular signal transduction. Binds the Fc region of antigen-complexed IgG with a preference for IgG1 and IgG3 isotypes. Interacts with CD2; this interaction is involved in NK cell activation and cytotoxicity. Interacts with S100A4; this interaction inhibits PKC-dependent phosphorylation of FCGR3A. Glycosylated. Glycosylation plays an inhibitory role in the interaction with IgG1 and IgG2. Post-translationally, undergoes rapid ectodomain shedding upon NK cell stimulation. The soluble form is produced by a proteolytic cleavage mediated by ADAM17. Repeated stimulation causes receptor shedding, a mechanism that allows for increased NK cell motility and detachment from opsonized target cells while avoiding activation-induced NK cell apoptosis. As to expression, lymphocytes and monocytes.

The protein localises to the cell membrane. It localises to the secreted. Receptor for the invariable Fc fragment of immunoglobulin gamma (IgG). Optimally activated upon binding of clustered antigen-IgG complexes displayed on cell surfaces, triggers lysis of antibody-coated cells, a process known as antibody-dependent cellular cytotoxicity (ADCC). Does not bind free monomeric IgG, thus avoiding inappropriate effector cell activation in the absence of antigenic trigger. Mediates IgG effector functions on natural killer (NK) cells. Binds antigen-IgG complexes generated upon infection and triggers NK cell-dependent cytokine production and degranulation to limit viral load and propagation. Involved in the generation of memory-like adaptive NK cells capable to produce high amounts of IFNG and to efficiently eliminate virus-infected cells via ADCC. Regulates NK cell survival and proliferation, in particular by preventing NK cell progenitor apoptosis. Fc-binding subunit that associates with CD247 and/or FCER1G adapters to form functional signaling complexes. Following the engagement of antigen-IgG complexes, triggers phosphorylation of immunoreceptor tyrosine-based activation motif (ITAM)-containing adapters with subsequent activation of phosphatidylinositol 3-kinase signaling and sustained elevation of intracellular calcium that ultimately drive NK cell activation. The ITAM-dependent signaling coupled to receptor phosphorylation by PKC mediates robust intracellular calcium flux that leads to production of pro-inflammatory cytokines, whereas in the absence of receptor phosphorylation it mainly activates phosphatidylinositol 3-kinase signaling leading to cell degranulation. Costimulates NK cells and trigger lysis of target cells independently of IgG binding. Mediates the antitumor activities of therapeutic antibodies. Upon ligation on monocytes triggers TNFA-dependent ADCC of IgG-coated tumor cells. Mediates enhanced ADCC in response to afucosylated IgGs. This is Low affinity immunoglobulin gamma Fc region receptor III-A from Macaca mulatta (Rhesus macaque).